Here is a 148-residue protein sequence, read N- to C-terminus: D-aminoacyl-tRNA deacylase (148 aa).

Residues 137-138 (GP) carry the Gly-cisPro motif, important for rejection of L-amino acids motif.

This sequence belongs to the DTD family. In terms of assembly, homodimer.

It localises to the cytoplasm. It catalyses the reaction glycyl-tRNA(Ala) + H2O = tRNA(Ala) + glycine + H(+). The catalysed reaction is a D-aminoacyl-tRNA + H2O = a tRNA + a D-alpha-amino acid + H(+). Its function is as follows. An aminoacyl-tRNA editing enzyme that deacylates mischarged D-aminoacyl-tRNAs. Also deacylates mischarged glycyl-tRNA(Ala), protecting cells against glycine mischarging by AlaRS. Acts via tRNA-based rather than protein-based catalysis; rejects L-amino acids rather than detecting D-amino acids in the active site. By recycling D-aminoacyl-tRNA to D-amino acids and free tRNA molecules, this enzyme counteracts the toxicity associated with the formation of D-aminoacyl-tRNA entities in vivo and helps enforce protein L-homochirality. This is D-aminoacyl-tRNA deacylase from Deinococcus geothermalis (strain DSM 11300 / CIP 105573 / AG-3a).